The following is a 613-amino-acid chain: Putative adenosylhomocysteinase 3 (613 aa).

Composition is skewed to low complexity over residues 1 to 14 and 35 to 44; these read MSVQ…AAKV and AAAVGAMVPP. Residues 1 to 186 form a disordered region; that stretch reads MSVQVVSAAA…KQQKNSKGSS (186 aa). Position 2 is an N-acetylserine (serine 2). The LISN domain, inhibits interaction with ITPR1 stretch occupies residues 2–111; that stretch reads SVQVVSAAAA…DGGEALVSPD (110 aa). Pro residues predominate over residues 52 to 68; it reads APAPAPAAERPPAPGPG. Over residues 70 to 80 the composition is skewed to low complexity; it reads GPTAALSPAAG. Serine 109 carries the post-translational modification Phosphoserine. The span at 137-146 shows a compositional bias: basic residues; that stretch reads RPTKIGRRSL. A compositionally biased stretch (low complexity) spans 147–166; it reads SRSISQSSTDSYSSAASYTD. Phosphoserine occurs at positions 151, 154, 157, and 160. Substrate-binding residues include threonine 238, aspartate 312, and glutamate 337. Residue 338-340 coordinates NAD(+); that stretch reads SVT. The substrate site is built by lysine 367 and aspartate 371. Residues asparagine 372, 403–408, glutamate 424, asparagine 459, 480–482, and asparagine 527 each bind NAD(+); these read GEVGKG and MGH.

This sequence belongs to the adenosylhomocysteinase family. Homotetramer. Forms heteromultimers with AHCYL1 (via the C-terminal region). Interacts with ITPR1; with lower affinity than AHCYL1 and maybe via ITPR1. Interacts with SLC4A4. Interacts with ZCCHC4. NAD(+) serves as cofactor. In terms of processing, phosphorylated during neuronal differentiation at the LISN domain. In terms of tissue distribution, highly expressed in cerebrum, cerebellum and kidney. Also expressed in thymus, spleen, testis, ovary and, at lower, levels in lung and liver (at protein level). In cerebellum, expressed in interneurons.

The protein localises to the cytoplasm. It is found in the microsome. The catalysed reaction is S-adenosyl-L-homocysteine + H2O = L-homocysteine + adenosine. Its pathway is amino-acid biosynthesis; L-homocysteine biosynthesis; L-homocysteine from S-adenosyl-L-homocysteine: step 1/1. Functionally, may regulate the electrogenic sodium/bicarbonate cotransporter SLC4A4 activity and Mg(2+)-sensitivity. On the contrary of its homolog AHCYL1, does not regulate ITPR1 sensitivity to inositol 1,4,5-trisphosphate. This Mus musculus (Mouse) protein is Putative adenosylhomocysteinase 3 (Ahcyl2).